The chain runs to 150 residues: Cytochrome c-type biogenesis protein CcmE (150 aa).

Residues Met-1–Arg-9 are Cytoplasmic-facing. The helical; Signal-anchor for type II membrane protein transmembrane segment at Ile-10–Gly-30 threads the bilayer. Topologically, residues Met-31–Gly-150 are periplasmic. Residues His-123 and Tyr-127 each contribute to the heme site.

Belongs to the CcmE/CycJ family.

Its subcellular location is the cell inner membrane. Functionally, heme chaperone required for the biogenesis of c-type cytochromes. Transiently binds heme delivered by CcmC and transfers the heme to apo-cytochromes in a process facilitated by CcmF and CcmH. This chain is Cytochrome c-type biogenesis protein CcmE, found in Rhodobacter capsulatus (strain ATCC BAA-309 / NBRC 16581 / SB1003).